Consider the following 138-residue polypeptide: Acidic phospholipase A2 Cvv-E6h (138 aa).

The first 16 residues, 1–16 (MRTLWIVAVLLLGVEG), serve as a signal peptide directing secretion. 7 cysteine pairs are disulfide-bonded: cysteine 42/cysteine 131, cysteine 44/cysteine 60, cysteine 59/cysteine 111, cysteine 65/cysteine 138, cysteine 66/cysteine 104, cysteine 73/cysteine 97, and cysteine 91/cysteine 102. The Ca(2+) site is built by tyrosine 43, glycine 45, and glycine 47. Histidine 63 is an active-site residue. Residue aspartate 64 participates in Ca(2+) binding. The active site involves aspartate 105.

It belongs to the phospholipase A2 family. Group II subfamily. D49 sub-subfamily. Ca(2+) serves as cofactor. As to expression, expressed by the venom gland.

The protein resides in the secreted. The enzyme catalyses a 1,2-diacyl-sn-glycero-3-phosphocholine + H2O = a 1-acyl-sn-glycero-3-phosphocholine + a fatty acid + H(+). Functionally, snake venom phospholipase A2 (PLA2) that shows very low inhibition of ADP-induced platelet aggregation in platelet-rich plasma of human, rabbit and guinea pig. In vivo, shows efficient edema-inducing activities in rat paws. PLA2 catalyzes the calcium-dependent hydrolysis of the 2-acyl groups in 3-sn-phosphoglycerides. This chain is Acidic phospholipase A2 Cvv-E6h, found in Crotalus viridis viridis (Prairie rattlesnake).